The chain runs to 120 residues: Large ribosomal subunit protein uL24 (120 aa).

A disordered region spans residues 1–26; that stretch reads MSKQPDKQRKSQRRAPLHERHKQVRA. Positions 10–24 are enriched in basic residues; it reads KSQRRAPLHERHKQV.

This sequence belongs to the universal ribosomal protein uL24 family. As to quaternary structure, part of the 50S ribosomal subunit. Interacts weakly with protein L4.

Functionally, one of two assembly initiator proteins, it binds directly to the 5'-end of the 23S rRNA, where it nucleates assembly of the 50S subunit. Stabilizes the tertiary rRNA structure within the 23S rRNA domain (domain I) to which it binds. Located at the polypeptide exit tunnel on the outside of the subunit. This Haloarcula marismortui (strain ATCC 43049 / DSM 3752 / JCM 8966 / VKM B-1809) (Halobacterium marismortui) protein is Large ribosomal subunit protein uL24 (rpl24).